A 282-amino-acid polypeptide reads, in one-letter code: 2-dehydro-3-deoxyphosphooctonate aldolase (282 aa).

Belongs to the KdsA family.

The protein resides in the cytoplasm. It carries out the reaction D-arabinose 5-phosphate + phosphoenolpyruvate + H2O = 3-deoxy-alpha-D-manno-2-octulosonate-8-phosphate + phosphate. The protein operates within carbohydrate biosynthesis; 3-deoxy-D-manno-octulosonate biosynthesis; 3-deoxy-D-manno-octulosonate from D-ribulose 5-phosphate: step 2/3. It participates in bacterial outer membrane biogenesis; lipopolysaccharide biosynthesis. In Shewanella oneidensis (strain ATCC 700550 / JCM 31522 / CIP 106686 / LMG 19005 / NCIMB 14063 / MR-1), this protein is 2-dehydro-3-deoxyphosphooctonate aldolase.